The chain runs to 390 residues: Chorismate synthase (390 aa).

NADP(+) contacts are provided by R39 and R45. Residues 132-134, 253-254, G298, 313-317, and R339 each bind FMN; these read RSS, NA, and KPIPT.

It belongs to the chorismate synthase family. As to quaternary structure, homotetramer. The cofactor is FMNH2.

It carries out the reaction 5-O-(1-carboxyvinyl)-3-phosphoshikimate = chorismate + phosphate. It participates in metabolic intermediate biosynthesis; chorismate biosynthesis; chorismate from D-erythrose 4-phosphate and phosphoenolpyruvate: step 7/7. Its function is as follows. Catalyzes the anti-1,4-elimination of the C-3 phosphate and the C-6 proR hydrogen from 5-enolpyruvylshikimate-3-phosphate (EPSP) to yield chorismate, which is the branch point compound that serves as the starting substrate for the three terminal pathways of aromatic amino acid biosynthesis. This reaction introduces a second double bond into the aromatic ring system. In Bacillus pumilus (strain SAFR-032), this protein is Chorismate synthase.